We begin with the raw amino-acid sequence, 243 residues long: 1-(5-phosphoribosyl)-5-[(5-phosphoribosylamino)methylideneamino] imidazole-4-carboxamide isomerase (243 aa).

The active-site Proton acceptor is the Asp8. Residue Asp130 is the Proton donor of the active site.

This sequence belongs to the HisA/HisF family.

The protein resides in the cytoplasm. It carries out the reaction 1-(5-phospho-beta-D-ribosyl)-5-[(5-phospho-beta-D-ribosylamino)methylideneamino]imidazole-4-carboxamide = 5-[(5-phospho-1-deoxy-D-ribulos-1-ylimino)methylamino]-1-(5-phospho-beta-D-ribosyl)imidazole-4-carboxamide. It participates in amino-acid biosynthesis; L-histidine biosynthesis; L-histidine from 5-phospho-alpha-D-ribose 1-diphosphate: step 4/9. The protein is 1-(5-phosphoribosyl)-5-[(5-phosphoribosylamino)methylideneamino] imidazole-4-carboxamide isomerase of Saccharophagus degradans (strain 2-40 / ATCC 43961 / DSM 17024).